Here is a 451-residue protein sequence, read N- to C-terminus: Oxygen-independent coproporphyrinogen III oxidase (451 aa).

One can recognise a Radical SAM core domain in the interval 45–278 (IPAGAAISLY…FETARELFLA (234 aa)). Residue Tyr-54 coordinates S-adenosyl-L-methionine. Residues Cys-60 and Cys-64 each contribute to the [4Fe-4S] cluster site. Phe-66 is a binding site for S-adenosyl-L-methionine. Cys-67 contributes to the [4Fe-4S] cluster binding site. Residues Gly-111, 112–113 (GT), Glu-144, Gln-171, Arg-183, Asp-208, Ala-242, and Ile-328 each bind S-adenosyl-L-methionine.

Belongs to the anaerobic coproporphyrinogen-III oxidase family. Monomer. The cofactor is [4Fe-4S] cluster.

Its subcellular location is the cytoplasm. It catalyses the reaction coproporphyrinogen III + 2 S-adenosyl-L-methionine = protoporphyrinogen IX + 2 5'-deoxyadenosine + 2 L-methionine + 2 CO2. Its pathway is porphyrin-containing compound metabolism; protoporphyrin-IX biosynthesis; protoporphyrinogen-IX from coproporphyrinogen-III (AdoMet route): step 1/1. Functionally, involved in the heme biosynthesis. Catalyzes the anaerobic oxidative decarboxylation of propionate groups of rings A and B of coproporphyrinogen III to yield the vinyl groups in protoporphyrinogen IX. The polypeptide is Oxygen-independent coproporphyrinogen III oxidase (hemN) (Paracoccus denitrificans (strain Pd 1222)).